A 142-amino-acid chain; its full sequence is Large ribosomal subunit protein uL11 (142 aa).

The protein belongs to the universal ribosomal protein uL11 family. In terms of assembly, part of the ribosomal stalk of the 50S ribosomal subunit. Interacts with L10 and the large rRNA to form the base of the stalk. L10 forms an elongated spine to which L12 dimers bind in a sequential fashion forming a multimeric L10(L12)X complex. In terms of processing, one or more lysine residues are methylated.

In terms of biological role, forms part of the ribosomal stalk which helps the ribosome interact with GTP-bound translation factors. The sequence is that of Large ribosomal subunit protein uL11 from Haemophilus influenzae (strain 86-028NP).